A 504-amino-acid chain; its full sequence is MEEFQRYLELDRSQQHYFLYPLIFQEYIYALAHNHGLTRSILLENSGYDNKSSLLIVKRLITRLYQQNHLIVSANDSNQNQFFGCNKNLYYQMISEGFAVILEIPFSIQLMSSLERKGIVKSHNLRSIHSIFPFLEDPFSHLNSALDILIPYPVHLEILVQTLRYRVKDVSSLHLLRLFLYEDPNSNNLITPKKAGSSFSKTNQRFFFFLYNSHVCEYESIFVFLRNQSSHLRSTSFGDLLERIYFYGKIEYLVEVLAKAFQANLWLFKDPFMHYVRYQGKSILASKGTSFLMNKWKYYFVNFWQCYFYLWSKPGRVYINQLSNHSLDLLGYLSSVRLNPSMVRSQMLEKAFIIDNAMKKFDAIVPIIPLIGSLAKAKFCNVLGHPISKAFWTDLSDSDIIDRFGRICRSLSHYHSGSSQKKSLYRIKYILRLSCARTLARKHKSTVRAFLKRLGSELLQEFFTSEEQILSLTFPRVSYTSRRLYRRRIWYLDIICINDFANHE.

Belongs to the intron maturase 2 family. MatK subfamily.

It is found in the plastid. The protein resides in the chloroplast. Its function is as follows. Usually encoded in the trnK tRNA gene intron. Probably assists in splicing its own and other chloroplast group II introns. This chain is Maturase K, found in Berzelia lanuginosa (Buttonbush).